The following is a 466-amino-acid chain: Probable agmatine/putrescine antiporter AguD (466 aa).

12 consecutive transmembrane segments (helical) span residues 8 to 28 (FSLF…EAAA), 30 to 50 (VAAI…AFLL), 85 to 105 (ASWF…VLCP), 120 to 140 (ISLL…LYPV), 144 to 164 (VWIL…LGGL), 192 to 212 (LSFI…CTFA), 226 to 246 (IIIG…GIGV), 273 to 293 (WFIS…MVSW), 325 to 345 (WGAA…APLL), 350 to 370 (LFWS…IPVF), 398 to 418 (VYMA…AIPL), and 426 to 446 (TEQL…ELII).

The protein belongs to the amino acid-polyamine-organocation (APC) superfamily. Glutamate:GABA antiporter (GGA) (TC 2.A.3.7) family.

It localises to the cell membrane. Probably catalyzes agmatine/putrescine exchange. The protein is Probable agmatine/putrescine antiporter AguD of Lactococcus lactis subsp. lactis (strain IL1403) (Streptococcus lactis).